The chain runs to 306 residues: tRNA pseudouridine synthase B (306 aa).

Asp43 acts as the Nucleophile in catalysis.

This sequence belongs to the pseudouridine synthase TruB family. Type 1 subfamily.

It catalyses the reaction uridine(55) in tRNA = pseudouridine(55) in tRNA. Responsible for synthesis of pseudouridine from uracil-55 in the psi GC loop of transfer RNAs. This is tRNA pseudouridine synthase B from Syntrophobacter fumaroxidans (strain DSM 10017 / MPOB).